The chain runs to 113 residues: Large ribosomal subunit protein bL19 (113 aa).

This sequence belongs to the bacterial ribosomal protein bL19 family.

Functionally, this protein is located at the 30S-50S ribosomal subunit interface and may play a role in the structure and function of the aminoacyl-tRNA binding site. This is Large ribosomal subunit protein bL19 from Mycobacterium marinum (strain ATCC BAA-535 / M).